Here is a 424-residue protein sequence, read N- to C-terminus: Serine--tRNA ligase (424 aa).

231 to 233 is an L-serine binding site; the sequence is TAE. 262-264 is an ATP binding site; sequence RSE. Glu285 serves as a coordination point for L-serine. 349 to 352 lines the ATP pocket; that stretch reads EISS. Ser385 serves as a coordination point for L-serine.

Belongs to the class-II aminoacyl-tRNA synthetase family. Type-1 seryl-tRNA synthetase subfamily. In terms of assembly, homodimer. The tRNA molecule binds across the dimer.

Its subcellular location is the cytoplasm. It carries out the reaction tRNA(Ser) + L-serine + ATP = L-seryl-tRNA(Ser) + AMP + diphosphate + H(+). It catalyses the reaction tRNA(Sec) + L-serine + ATP = L-seryl-tRNA(Sec) + AMP + diphosphate + H(+). It participates in aminoacyl-tRNA biosynthesis; selenocysteinyl-tRNA(Sec) biosynthesis; L-seryl-tRNA(Sec) from L-serine and tRNA(Sec): step 1/1. In terms of biological role, catalyzes the attachment of serine to tRNA(Ser). Is also able to aminoacylate tRNA(Sec) with serine, to form the misacylated tRNA L-seryl-tRNA(Sec), which will be further converted into selenocysteinyl-tRNA(Sec). The polypeptide is Serine--tRNA ligase (Marinobacter nauticus (strain ATCC 700491 / DSM 11845 / VT8) (Marinobacter aquaeolei)).